Reading from the N-terminus, the 528-residue chain is Phosphoenolpyruvate carboxykinase (ATP) (528 aa).

3 residues coordinate substrate: arginine 56, tyrosine 192, and lysine 198. ATP is bound by residues lysine 198, histidine 217, and 233 to 241 (GLSGTGKTT). Mn(2+) contacts are provided by lysine 198 and histidine 217. A Mn(2+)-binding site is contributed by aspartate 254. Glutamate 282, arginine 319, and threonine 444 together coordinate ATP. A substrate-binding site is contributed by arginine 319.

This sequence belongs to the phosphoenolpyruvate carboxykinase (ATP) family. It depends on Mn(2+) as a cofactor.

The protein resides in the cytoplasm. It carries out the reaction oxaloacetate + ATP = phosphoenolpyruvate + ADP + CO2. Its pathway is carbohydrate biosynthesis; gluconeogenesis. Involved in the gluconeogenesis. Catalyzes the conversion of oxaloacetate (OAA) to phosphoenolpyruvate (PEP) through direct phosphoryl transfer between the nucleoside triphosphate and OAA. The protein is Phosphoenolpyruvate carboxykinase (ATP) of Bacillus cereus (strain G9842).